The sequence spans 388 residues: Salivary protein Tsal2A (388 aa).

The signal sequence occupies residues 1-18; sequence MSLLYGLLILAFTRSCLV. An N-linked (GlcNAc...) asparagine glycan is attached at N260.

The protein belongs to the DNA/RNA non-specific endonuclease family. A divalent metal cation is required as a cofactor. In terms of tissue distribution, saliva (at protein level).

It is found in the secreted. Functionally, binds double-stranded DNA (dsDNA) with high affinity. Binds double-stranded RNA. Binds single-stranded DNA with lower affinity and with a preference for purine-rich sequences. Shows residual nuclease activity for dsDNA. Facilitates blood meal intake by lowering the local viscosity created by the release of host DNA. This chain is Salivary protein Tsal2A, found in Glossina morsitans morsitans (Savannah tsetse fly).